The chain runs to 164 residues: Protein SprT (164 aa).

Residues Tyr-13–Val-156 enclose the SprT-like domain. His-69 contributes to the Zn(2+) binding site. Glu-70 is a catalytic residue. His-73 is a Zn(2+) binding site.

Belongs to the SprT family. It depends on Zn(2+) as a cofactor.

It localises to the cytoplasm. This is Protein SprT from Pseudomonas putida (strain ATCC 700007 / DSM 6899 / JCM 31910 / BCRC 17059 / LMG 24140 / F1).